A 505-amino-acid polypeptide reads, in one-letter code: MTEQTPTPQLPADENSLIAERRAKLGALRGQGIAYPNDFVRTHFAGDLQAEFAEAETWTAEALEAADRSVKLAGRLMAKRVMGKASFAQIQDESGRVQLFLQGNVLGDAYTAFKGWDVGDIVAVEGGLTRTKTGELSVKATALRLLTKSLRPLPDKWHGLSDVEQRYRQRYVDLIVTPEAREVFIKRSKIIRAIRAWLDARRFLEVETPMMHYIPGGATAKPFTTHHNALDLDLYLRVAPELYLKRLVVGGLERVYEINRNFRNEGVSTRHNPEFTMLELYEAYATYHEIMDLTEQVIRDTAQGVLGTTQVSWDGADIDLAPAFRRWRMDEAVRHHNPEISAADCTDRAALLRHCERLKIKVKPSYGWGKLLLEIFESTVEHTLVQPTFITDHPVEVSPLARASDTEPGYTDRFELFINGKELANGFSELNDPEDQAARFQAQVQAKDGGDDEAMHYDADYIRALEYGMAPTGGLGIGIDRLVMLLTGSTSIRDVLLFPYMRPEA.

The Mg(2+) site is built by glutamate 415 and glutamate 422.

It belongs to the class-II aminoacyl-tRNA synthetase family. In terms of assembly, homodimer. The cofactor is Mg(2+).

The protein resides in the cytoplasm. The catalysed reaction is tRNA(Lys) + L-lysine + ATP = L-lysyl-tRNA(Lys) + AMP + diphosphate. The polypeptide is Lysine--tRNA ligase (Xanthomonas campestris pv. campestris (strain 8004)).